We begin with the raw amino-acid sequence, 249 residues long: Chitooligosaccharide deacetylase (249 aa).

Mg(2+)-binding residues include His61 and His125.

This sequence belongs to the YdjC deacetylase family. ChbG subfamily. Homodimer. Requires Mg(2+) as cofactor.

It localises to the cytoplasm. It carries out the reaction N,N'-diacetylchitobiose + H2O = N-acetyl-beta-D-glucosaminyl-(1-&gt;4)-D-glucosamine + acetate. The enzyme catalyses diacetylchitobiose-6'-phosphate + H2O = N'-monoacetylchitobiose-6'-phosphate + acetate. The protein operates within glycan degradation; chitin degradation. Functionally, involved in the degradation of chitin. ChbG is essential for growth on the acetylated chitooligosaccharides chitobiose and chitotriose but is dispensable for growth on cellobiose and chitosan dimer, the deacetylated form of chitobiose. Deacetylation of chitobiose-6-P and chitotriose-6-P is necessary for both the activation of the chb promoter by the regulatory protein ChbR and the hydrolysis of phosphorylated beta-glucosides by the phospho-beta-glucosidase ChbF. Catalyzes the removal of only one acetyl group from chitobiose-6-P to yield monoacetylchitobiose-6-P, the inducer of ChbR and the substrate of ChbF. This Escherichia coli O17:K52:H18 (strain UMN026 / ExPEC) protein is Chitooligosaccharide deacetylase.